The chain runs to 63 residues: uncharacterized protein (63 aa).

A signal peptide spans Met1–Ala18.

This is an uncharacterized protein from Bacillus subtilis (strain 168).